We begin with the raw amino-acid sequence, 137 residues long: Large ribosomal subunit protein uL16 (137 aa).

This sequence belongs to the universal ribosomal protein uL16 family. As to quaternary structure, part of the 50S ribosomal subunit.

In terms of biological role, binds 23S rRNA and is also seen to make contacts with the A and possibly P site tRNAs. The polypeptide is Large ribosomal subunit protein uL16 (Methylobacterium sp. (strain 4-46)).